A 74-amino-acid chain; its full sequence is Translation initiation factor IF-1 (74 aa).

Positions Met1 to Lys72 constitute an S1-like domain.

Belongs to the IF-1 family. As to quaternary structure, component of the 30S ribosomal translation pre-initiation complex which assembles on the 30S ribosome in the order IF-2 and IF-3, IF-1 and N-formylmethionyl-tRNA(fMet); mRNA recruitment can occur at any time during PIC assembly.

It localises to the cytoplasm. In terms of biological role, one of the essential components for the initiation of protein synthesis. Stabilizes the binding of IF-2 and IF-3 on the 30S subunit to which N-formylmethionyl-tRNA(fMet) subsequently binds. Helps modulate mRNA selection, yielding the 30S pre-initiation complex (PIC). Upon addition of the 50S ribosomal subunit IF-1, IF-2 and IF-3 are released leaving the mature 70S translation initiation complex. This is Translation initiation factor IF-1 from Synechococcus sp. (strain JA-3-3Ab) (Cyanobacteria bacterium Yellowstone A-Prime).